Reading from the N-terminus, the 255-residue chain is Ribosomal RNA small subunit methyltransferase A (255 aa).

S-adenosyl-L-methionine-binding residues include asparagine 12, leucine 14, glycine 39, glutamate 60, aspartate 84, and asparagine 106.

It belongs to the class I-like SAM-binding methyltransferase superfamily. rRNA adenine N(6)-methyltransferase family. RsmA subfamily.

It is found in the cytoplasm. The catalysed reaction is adenosine(1518)/adenosine(1519) in 16S rRNA + 4 S-adenosyl-L-methionine = N(6)-dimethyladenosine(1518)/N(6)-dimethyladenosine(1519) in 16S rRNA + 4 S-adenosyl-L-homocysteine + 4 H(+). Functionally, specifically dimethylates two adjacent adenosines (A1518 and A1519) in the loop of a conserved hairpin near the 3'-end of 16S rRNA in the 30S particle. May play a critical role in biogenesis of 30S subunits. This chain is Ribosomal RNA small subunit methyltransferase A, found in Herminiimonas arsenicoxydans.